Consider the following 570-residue polypeptide: Pyruvate decarboxylase (570 aa).

Positions 1–2 (MV) are cleaved as a propeptide — removed in mature form. Positions 33 and 120 each coordinate substrate. The thiamine pyrophosphate binding stretch occupies residues 394-476 (DSWFNGIQLK…MLINNRGYTI (83 aa)). Aspartate 444, asparagine 471, and glycine 473 together coordinate Mg(2+). Position 477 (glutamate 477) interacts with substrate.

The protein belongs to the TPP enzyme family. In terms of assembly, homomer. A metal cation is required as a cofactor. The cofactor is thiamine diphosphate.

It localises to the cytoplasm. The enzyme catalyses a 2-oxocarboxylate + H(+) = an aldehyde + CO2. It functions in the pathway carbohydrate metabolism; pyruvate metabolism. The polypeptide is Pyruvate decarboxylase (cfp) (Neurospora crassa (strain ATCC 24698 / 74-OR23-1A / CBS 708.71 / DSM 1257 / FGSC 987)).